Here is a 23-residue protein sequence, read N- to C-terminus: Melittin-related peptide AK-23-1 (23 aa).

Lysine 23 is modified (lysine amide).

Expressed by the skin glands.

The protein localises to the secreted. This Rana arvalis (Moor frog) protein is Melittin-related peptide AK-23-1.